A 1910-amino-acid polypeptide reads, in one-letter code: A disintegrin and metalloproteinase with thrombospondin motifs 20 (1910 aa).

The N-terminal stretch at 1-21 (MWVAKWLTGLLYHLSLFITRS) is a signal peptide. The propeptide occupies 22–253 (WEVDFHPRQE…DERRHSRKKR (232 aa)). Residues N92 and N191 are each glycosylated (N-linked (GlcNAc...) asparagine). Residues 259–467 (RYIEIMVTAD…GYGECLLDKP (209 aa)) enclose the Peptidase M12B domain. Disulfide bonds link C334–C387, C363–C369, C381–C462, C419–C446, C489–C511, C500–C521, C506–C540, C534–C545, C568–C605, C572–C610, and C583–C595. H403 provides a ligand contact to Zn(2+). Residue E404 is part of the active site. H407 and H413 together coordinate Zn(2+). N-linked (GlcNAc...) asparagine glycosylation occurs at N445. Residues 468–555 (DEEIYNLPSE…VNKETETRPV (88 aa)) form the Disintegrin domain. In terms of domain architecture, TSP type-1 1 spans 556–611 (NGEWGPWEPYSSCSRTCGGGIESATRRCNRPEPRNGGNYCVGRRMKFRSCNTDSCP). 5 N-linked (GlcNAc...) asparagine glycosylation sites follow: N702, N717, N728, N809, and N870. Residues 724-846 (TGVFNSSHYG…FNIPLEERSD (123 aa)) form a spacer region. 14 consecutive TSP type-1 domains span residues 846-904 (DMFT…NTDC), 905-961 (ELRW…QELC), 966-1023 (VFTR…FSCP), 1024-1073 (SWAA…SPCE), 1076-1135 (TCAS…TPCS), 1152-1206 (KMAQ…DCFT), 1207-1264 (PCGE…AACP), 1304-1356 (RGNQ…QCGP), 1358-1416 (PCPQ…HACP), 1417-1475 (ADVS…VRCP), 1476-1531 (SWKA…QDCV), 1535-1588 (GMER…NPPC), 1589-1652 (NYIV…INSC), and 1654-1710 (HLAT…NDCK). N1061 carries an N-linked (GlcNAc...) asparagine glycan. N-linked (GlcNAc...) asparagine glycosylation occurs at N1456. N1542 and N1572 each carry an N-linked (GlcNAc...) asparagine glycan. In terms of domain architecture, GON spans 1711–1910 (SFTTCKEIQV…MTTGLPIQVI (200 aa)). N-linked (GlcNAc...) asparagine glycans are attached at residues N1763, N1781, and N1852.

The cofactor is Zn(2+). In terms of processing, the precursor is cleaved by a furin endopeptidase. Glycosylated. Can be O-fucosylated by POFUT2 on a serine or a threonine residue found within the consensus sequence C1-X(2)-(S/T)-C2-G of the TSP type-1 repeat domains where C1 and C2 are the first and second cysteine residue of the repeat, respectively. Fucosylated repeats can then be further glycosylated by the addition of a beta-1,3-glucose residue by the glucosyltransferase, B3GALTL. Fucosylation mediates the efficient secretion of ADAMTS family members. Can also be C-glycosylated with one or two mannose molecules on tryptophan residues within the consensus sequence W-X-X-W of the TPRs, and N-glycosylated. These other glycosylations can also facilitate secretion. As to expression, very sparingly expressed, although is detected at low levels in testis, prostate, ovary, heart, placenta, lung and pancreas. Overexpressed in several brain, colon and breast carcinomas.

It is found in the secreted. The protein localises to the extracellular space. Its subcellular location is the extracellular matrix. Its function is as follows. May play a role in tissue-remodeling process occurring in both normal and pathological conditions. May have a protease-independent function in the transport from the endoplasmic reticulum to the Golgi apparatus of secretory cargos, mediated by the GON domain. This chain is A disintegrin and metalloproteinase with thrombospondin motifs 20 (ADAMTS20), found in Homo sapiens (Human).